We begin with the raw amino-acid sequence, 296 residues long: Enoyl-CoA hydratase AKT3-2 (296 aa).

Residues 294 to 296 carry the Peroxisomal targeting signal type 1 motif; it reads PKL.

This sequence belongs to the enoyl-CoA hydratase/isomerase family.

Its subcellular location is the peroxisome. The enzyme catalyses a (3S)-3-hydroxyacyl-CoA = a (2E)-enoyl-CoA + H2O. It carries out the reaction a 4-saturated-(3S)-3-hydroxyacyl-CoA = a (3E)-enoyl-CoA + H2O. The protein operates within mycotoxin biosynthesis. Enoyl-CoA hydratase; part of the gene clusters that mediate the biosynthesis of the host-selective toxins (HSTs) AK-toxins responsible for Japanese pear black spot disease by the Japanese pear pathotype. AK-toxins are esters of 9,10-epoxy 8-hydroxy 9-methyldecatrienoic acid (EDA). On cellular level, AK-toxins affect plasma membrane of susceptible cells and cause a sudden increase in loss of K(+) after a few minutes of toxin treatment. The acyl-CoA ligase AKT1, the hydrolase AKT2 and enoyl-CoA hydratase AKT3 are all involved in the biosynthesis of the AK-, AF- and ACT-toxin common 9,10-epoxy-8-hydroxy-9-methyl-decatrienoic acid (EDA) structural moiety. Part of the EDA biosynthesis occurs in the peroxisome since these 3 enzymes are localized in peroxisomes. The exact roles of the 3 enzymes, as well as of additional AK-toxin clusters enzymes, including AKT4, AKT6 and AKTS1, have still to be elucidated. The Cytochrome P450 monooxygenase AKT7 on the other side functions to limit production of EDA and AK-toxin, probably via the catalysis of a side reaction of EDA or its precursor. This Alternaria alternata (Alternaria rot fungus) protein is Enoyl-CoA hydratase AKT3-2.